Here is a 185-residue protein sequence, read N- to C-terminus: Crossover junction endodeoxyribonuclease RuvC (185 aa).

Active-site residues include D16, E75, and D147. Residues D16, E75, and D147 each contribute to the Mg(2+) site.

Belongs to the RuvC family. Homodimer which binds Holliday junction (HJ) DNA. The HJ becomes 2-fold symmetrical on binding to RuvC with unstacked arms; it has a different conformation from HJ DNA in complex with RuvA. In the full resolvosome a probable DNA-RuvA(4)-RuvB(12)-RuvC(2) complex forms which resolves the HJ. It depends on Mg(2+) as a cofactor.

The protein localises to the cytoplasm. It carries out the reaction Endonucleolytic cleavage at a junction such as a reciprocal single-stranded crossover between two homologous DNA duplexes (Holliday junction).. The RuvA-RuvB-RuvC complex processes Holliday junction (HJ) DNA during genetic recombination and DNA repair. Endonuclease that resolves HJ intermediates. Cleaves cruciform DNA by making single-stranded nicks across the HJ at symmetrical positions within the homologous arms, yielding a 5'-phosphate and a 3'-hydroxyl group; requires a central core of homology in the junction. The consensus cleavage sequence is 5'-(A/T)TT(C/G)-3'. Cleavage occurs on the 3'-side of the TT dinucleotide at the point of strand exchange. HJ branch migration catalyzed by RuvA-RuvB allows RuvC to scan DNA until it finds its consensus sequence, where it cleaves and resolves the cruciform DNA. The chain is Crossover junction endodeoxyribonuclease RuvC from Aromatoleum aromaticum (strain DSM 19018 / LMG 30748 / EbN1) (Azoarcus sp. (strain EbN1)).